The following is a 262-amino-acid chain: MESELVRRLAPRLGLAEPSVLRKAEEFLRLSKVKCVSLSARSSETSNAVICLDLAASCRKCPLDRAYLIRLSGLNKMMYQSCLKSFECLLGLNSNVGIRDLAVQFSCTEAVNLAAEILQSYKSGLPETQRADLDLSRPLFTTAALLSACKILKIKVDKTKMITTSGVKKAILDRLCKQLEKIGQQINRDSADLARPALKRKKPEFSPTLKKKEPGLEPPAKEIEVIETLHKLPKDEDLTQDYEEWKRKILENAAKAQTATAE.

The segment at 197–217 (ALKRKKPEFSPTLKKKEPGLE) is disordered. Lys221 participates in a covalent cross-link: Glycyl lysine isopeptide (Lys-Gly) (interchain with G-Cter in SUMO2). Thr239 is modified (phosphothreonine).

It belongs to the ORC6 family. In terms of assembly, component of ORC, a complex composed of at least 6 subunits: ORC1, ORC2, ORC3, ORC4, ORC5 and ORC6. ORC is regulated in a cell-cycle dependent manner. It is sequentially assembled at the exit from anaphase of mitosis and disassembled as cells enter S phase. Interacts with DBF4.

It localises to the nucleus. Component of the origin recognition complex (ORC) that binds origins of replication. DNA-binding is ATP-dependent. The specific DNA sequences that define origins of replication have not been identified yet. ORC is required to assemble the pre-replication complex necessary to initiate DNA replication. The polypeptide is Origin recognition complex subunit 6 (Orc6) (Mus musculus (Mouse)).